The primary structure comprises 332 residues: Glycerol-3-phosphate dehydrogenase [NAD(P)+] (332 aa).

NADPH contacts are provided by serine 11, tryptophan 12, lysine 32, and lysine 106. Residues lysine 106, glycine 137, and serine 139 each contribute to the sn-glycerol 3-phosphate site. Alanine 141 serves as a coordination point for NADPH. Lysine 192, aspartate 245, serine 255, arginine 256, and asparagine 257 together coordinate sn-glycerol 3-phosphate. The active-site Proton acceptor is lysine 192. Arginine 256 serves as a coordination point for NADPH. Residues valine 280 and glutamate 282 each contribute to the NADPH site.

Belongs to the NAD-dependent glycerol-3-phosphate dehydrogenase family.

The protein localises to the cytoplasm. It catalyses the reaction sn-glycerol 3-phosphate + NAD(+) = dihydroxyacetone phosphate + NADH + H(+). It carries out the reaction sn-glycerol 3-phosphate + NADP(+) = dihydroxyacetone phosphate + NADPH + H(+). Its pathway is membrane lipid metabolism; glycerophospholipid metabolism. Functionally, catalyzes the reduction of the glycolytic intermediate dihydroxyacetone phosphate (DHAP) to sn-glycerol 3-phosphate (G3P), the key precursor for phospholipid synthesis. This chain is Glycerol-3-phosphate dehydrogenase [NAD(P)+], found in Macrococcus caseolyticus (strain JCSC5402) (Macrococcoides caseolyticum).